Reading from the N-terminus, the 177-residue chain is ATP-dependent protease subunit HslV (177 aa).

The active site involves T6. 3 residues coordinate Na(+): A162, C165, and T168.

The protein belongs to the peptidase T1B family. HslV subfamily. A double ring-shaped homohexamer of HslV is capped on each side by a ring-shaped HslU homohexamer. The assembly of the HslU/HslV complex is dependent on binding of ATP.

The protein resides in the cytoplasm. The catalysed reaction is ATP-dependent cleavage of peptide bonds with broad specificity.. Its activity is regulated as follows. Allosterically activated by HslU binding. In terms of biological role, protease subunit of a proteasome-like degradation complex believed to be a general protein degrading machinery. The chain is ATP-dependent protease subunit HslV from Lawsonia intracellularis (strain PHE/MN1-00).